Here is a 255-residue protein sequence, read N- to C-terminus: Pyrroloquinoline-quinone synthase (255 aa).

Belongs to the PqqC family.

It carries out the reaction 6-(2-amino-2-carboxyethyl)-7,8-dioxo-1,2,3,4,7,8-hexahydroquinoline-2,4-dicarboxylate + 3 O2 = pyrroloquinoline quinone + 2 H2O2 + 2 H2O + H(+). The protein operates within cofactor biosynthesis; pyrroloquinoline quinone biosynthesis. Ring cyclization and eight-electron oxidation of 3a-(2-amino-2-carboxyethyl)-4,5-dioxo-4,5,6,7,8,9-hexahydroquinoline-7,9-dicarboxylic-acid to PQQ. This Acinetobacter baylyi (strain ATCC 33305 / BD413 / ADP1) protein is Pyrroloquinoline-quinone synthase.